The sequence spans 368 residues: tRNA 2-selenouridine synthase (368 aa).

Residues 15–138 (FLNQHPIMDV…MRQYLIGVIE (124 aa)) enclose the Rhodanese domain. Cys-98 (S-selanylcysteine intermediate) is an active-site residue.

The protein belongs to the SelU family. In terms of assembly, monomer.

The catalysed reaction is 5-methylaminomethyl-2-thiouridine(34) in tRNA + selenophosphate + (2E)-geranyl diphosphate + H2O + H(+) = 5-methylaminomethyl-2-selenouridine(34) in tRNA + (2E)-thiogeraniol + phosphate + diphosphate. It catalyses the reaction 5-methylaminomethyl-2-thiouridine(34) in tRNA + (2E)-geranyl diphosphate = 5-methylaminomethyl-S-(2E)-geranyl-thiouridine(34) in tRNA + diphosphate. The enzyme catalyses 5-methylaminomethyl-S-(2E)-geranyl-thiouridine(34) in tRNA + selenophosphate + H(+) = 5-methylaminomethyl-2-(Se-phospho)selenouridine(34) in tRNA + (2E)-thiogeraniol. It carries out the reaction 5-methylaminomethyl-2-(Se-phospho)selenouridine(34) in tRNA + H2O = 5-methylaminomethyl-2-selenouridine(34) in tRNA + phosphate. Involved in the post-transcriptional modification of the uridine at the wobble position (U34) of tRNA(Lys), tRNA(Glu) and tRNA(Gln). Catalyzes the conversion of 2-thiouridine (S2U-RNA) to 2-selenouridine (Se2U-RNA). Acts in a two-step process involving geranylation of 2-thiouridine (S2U) to S-geranyl-2-thiouridine (geS2U) and subsequent selenation of the latter derivative to 2-selenouridine (Se2U) in the tRNA chain. This is tRNA 2-selenouridine synthase from Shewanella baltica (strain OS155 / ATCC BAA-1091).